A 555-amino-acid polypeptide reads, in one-letter code: Steroid-22-oyl-CoA synthetase (555 aa).

It belongs to the ATP-dependent AMP-binding enzyme family.

The catalysed reaction is 3-oxochol-4-en-22-oate + ATP + CoA = 3-oxochol-4-en-22-oyl-CoA + AMP + diphosphate. It carries out the reaction 3-hydroxy-9-oxo-9,10-seco-chola-1,3,5-trien-22-oate + ATP + CoA = 3-hydroxy-9-oxo-9,10-seco-chola-1,3,5-trien-22-oyl-CoA + AMP + diphosphate. Its pathway is steroid metabolism. In terms of biological role, involved in cholate catabolism. Catalyzes the ATP-dependent formation of CoA thioesters of steroids with isopropanoyl side chains, likely occurring as degradation intermediates. Can use 4-BNC, HSBNC and HIDP as substrate. The sequence is that of Steroid-22-oyl-CoA synthetase from Rhodococcus jostii (strain RHA1).